The following is a 425-amino-acid chain: Aspartic protease 2 (425 aa).

Residues 1-16 (MRSILVLVALIGCIAA) form the signal peptide. One can recognise a Peptidase A1 domain in the interval 72 to 421 (YLGEITIGTP…DIEKKRIGFA (350 aa)). D90 is an active-site residue. The cysteines at positions 103 and 145 are disulfide-linked. 3 N-linked (GlcNAc...) asparagine glycosylation sites follow: N163, N197, and N304. D316 is a catalytic residue. C351 and C382 are oxidised to a cystine. 2 N-linked (GlcNAc...) asparagine glycosylation sites follow: N354 and N365.

Belongs to the peptidase A1 family. Post-translationally, cleaved into a mature form. Expressed in intestine, amphidal glands and excretory gland (at protein level).

The protein resides in the secreted. Its activity is regulated as follows. Inhibited by pepstatin A. Aspartic protease which cleaves several human serum proteins including hemoglobin, fibrinogen and albumin. Appears to cleave preferentially between P1 (Ala, Leu, Val, Phe and Gly) and P1' (Ala and Leu) residues. The chain is Aspartic protease 2 from Necator americanus (Human hookworm).